The following is a 144-amino-acid chain: MPPKKKKVTGLIKLQIKAGAANPAPPVGPALGQHGVNIMEFCKAYNAATESQRGMVVPVEITVYEDRSFTFVTKTPPAARLILKHAGIEKGSGEPHKTKVANVTRDQVREIATIKMPDLNANDLDAAEKIIAGTARSMGVTVEG.

This sequence belongs to the universal ribosomal protein uL11 family. In terms of assembly, part of the ribosomal stalk of the 50S ribosomal subunit. Interacts with L10 and the large rRNA to form the base of the stalk. L10 forms an elongated spine to which L12 dimers bind in a sequential fashion forming a multimeric L10(L12)X complex. In terms of processing, one or more lysine residues are methylated.

In terms of biological role, forms part of the ribosomal stalk which helps the ribosome interact with GTP-bound translation factors. The sequence is that of Large ribosomal subunit protein uL11 from Streptomyces sp. (strain FRI-5).